The chain runs to 298 residues: Bifunctional protein FolD (298 aa).

Residues 165-167 (GRG), Ser-194, and Ile-235 contribute to the NADP(+) site.

The protein belongs to the tetrahydrofolate dehydrogenase/cyclohydrolase family. Homodimer.

It catalyses the reaction (6R)-5,10-methylene-5,6,7,8-tetrahydrofolate + NADP(+) = (6R)-5,10-methenyltetrahydrofolate + NADPH. The catalysed reaction is (6R)-5,10-methenyltetrahydrofolate + H2O = (6R)-10-formyltetrahydrofolate + H(+). Its pathway is one-carbon metabolism; tetrahydrofolate interconversion. Its function is as follows. Catalyzes the oxidation of 5,10-methylenetetrahydrofolate to 5,10-methenyltetrahydrofolate and then the hydrolysis of 5,10-methenyltetrahydrofolate to 10-formyltetrahydrofolate. This Amoebophilus asiaticus (strain 5a2) protein is Bifunctional protein FolD.